Here is a 379-residue protein sequence, read N- to C-terminus: Carbamoyl phosphate synthase small chain (379 aa).

The interval 1-188 (MSTPAILALA…ELGKGFTQPE (188 aa)) is CPSase. The L-glutamine site is built by Ser-47, Gly-240, and Gly-242. A Glutamine amidotransferase type-1 domain is found at 192 to 379 (HVVAYDYGVK…FIELIEAAKK (188 aa)). Residue Cys-269 is the Nucleophile of the active site. L-glutamine is bound by residues Leu-270, Gln-273, Asn-311, Gly-313, and Phe-314. Residues His-353 and Glu-355 contribute to the active site.

Belongs to the CarA family. Composed of two chains; the small (or glutamine) chain promotes the hydrolysis of glutamine to ammonia, which is used by the large (or ammonia) chain to synthesize carbamoyl phosphate. Tetramer of heterodimers (alpha,beta)4.

The enzyme catalyses hydrogencarbonate + L-glutamine + 2 ATP + H2O = carbamoyl phosphate + L-glutamate + 2 ADP + phosphate + 2 H(+). It carries out the reaction L-glutamine + H2O = L-glutamate + NH4(+). Its pathway is amino-acid biosynthesis; L-arginine biosynthesis; carbamoyl phosphate from bicarbonate: step 1/1. It participates in pyrimidine metabolism; UMP biosynthesis via de novo pathway; (S)-dihydroorotate from bicarbonate: step 1/3. Small subunit of the glutamine-dependent carbamoyl phosphate synthetase (CPSase). CPSase catalyzes the formation of carbamoyl phosphate from the ammonia moiety of glutamine, carbonate, and phosphate donated by ATP, constituting the first step of 2 biosynthetic pathways, one leading to arginine and/or urea and the other to pyrimidine nucleotides. The small subunit (glutamine amidotransferase) binds and cleaves glutamine to supply the large subunit with the substrate ammonia. The polypeptide is Carbamoyl phosphate synthase small chain (Acinetobacter baylyi (strain ATCC 33305 / BD413 / ADP1)).